The sequence spans 165 residues: GPI-anchored protein LORELEI (165 aa).

A signal peptide spans 1-20 (MELILLFFFLMALLVSLSSS). The required for its function in pollen tube reception stretch occupies residues 82–93 (PYVSQINDMNSD). N137 is a glycosylation site (N-linked (GlcNAc...) asparagine). S139 is lipidated: GPI-anchor amidated serine. The propeptide at 140–165 (TADSTPRFISLLISAATAVFALLVLT) is removed in mature form.

As to quaternary structure, interacts with FER. As to expression, expressed in leaves, buds, flowers and stems. Highest expression in the synergid cells of the female gametophyte.

It localises to the cell membrane. In terms of biological role, female gametophyte-specific component of the signaling pathway required for fertilization. Required for reception of the pollen tube by the female gametophyte. Acts specifically at the synergid cell surface for pollen tube reception. Plays a role in double fertilization and early seed development. Component of the FER-regulated Rho GTPase signaling complex. Acts as a chaperone and coreceptor for FER. Required for localization of FER to the plasma membrane. The protein is GPI-anchored protein LORELEI (LRE) of Arabidopsis thaliana (Mouse-ear cress).